We begin with the raw amino-acid sequence, 377 residues long: MTSSETTTDHPRTGKCPIDHSKFARSNEANPDAYINGIKKDQQSSSWWNSLWSRNTDVASEPDVAMLHKKPSTVDTHDHPLANPPPGCPMHKASNENSTGFFSNLFGREKQNSEATPAVQPPATCPMSNSNQKPAGVSEVLTGVDSKQQSYVPEGCPVATPKRGWFNWFGNNDDQKQEAYEVDKSNMMYKNIPQTAVDDQVVGLETTRTTSSIPKVDGKNWEYPSPQQMYNAMWRKGYRDSGENVPIMVQVHNFLNEGAWSEIKAWEREAGENTEPKLLRFEGNANKRTPRALWYMMLGRINPNRWGSGEGPFDRHDWYVQRKDNSIVRYVIDYYEAPDSADGKPVFSLDVRPAVDSFESVALRWKHWRAMRQMQQQ.

2 disordered regions span residues 1-29 and 111-136; these read MTSSETTTDHPRTGKCPIDHSKFARSNEA and QNSEATPAVQPPATCPMSNSNQKPAG. The span at 7-22 shows a compositional bias: basic and acidic residues; that stretch reads TTDHPRTGKCPIDHSK. 2 HRM repeats span residues 114-119 and 124-129; these read EATPAV and TCPMSN.

Belongs to the cytochrome c-type heme lyase family.

It localises to the mitochondrion inner membrane. Its subcellular location is the mitochondrion intermembrane space. It catalyses the reaction holo-[cytochrome c] = apo-[cytochrome c] + heme b. Its function is as follows. Lyase that catalyzes the covalent linking of the heme group to the cytochrome C apoprotein to produce the mature functional cytochrome. This chain is Putative holocytochrome-c synthase, found in Schizosaccharomyces pombe (strain 972 / ATCC 24843) (Fission yeast).